Here is a 214-residue protein sequence, read N- to C-terminus: Octanoyltransferase (214 aa).

The region spanning 36 to 214 is the BPL/LPL catalytic domain; it reads GRESEMVWLL…QQKFDTIFLQ (179 aa). Residues 75-82, 147-149, and 160-162 contribute to the substrate site; these read RGGKYSYH, AFG, and GFS. Cys-178 serves as the catalytic Acyl-thioester intermediate.

This sequence belongs to the LipB family.

It is found in the cytoplasm. It catalyses the reaction octanoyl-[ACP] + L-lysyl-[protein] = N(6)-octanoyl-L-lysyl-[protein] + holo-[ACP] + H(+). Its pathway is protein modification; protein lipoylation via endogenous pathway; protein N(6)-(lipoyl)lysine from octanoyl-[acyl-carrier-protein]: step 1/2. Catalyzes the transfer of endogenously produced octanoic acid from octanoyl-acyl-carrier-protein onto the lipoyl domains of lipoate-dependent enzymes. Lipoyl-ACP can also act as a substrate although octanoyl-ACP is likely to be the physiological substrate. The protein is Octanoyltransferase of Anaplasma marginale (strain Florida).